Reading from the N-terminus, the 58-residue chain is ComX pheromone (58 aa).

The propeptide occupies 1 to 52; the sequence is MKQDMIDYLMKNPQVLTKLENGEASLIGIPDKLIPSIVDIFNKKMTLSKKCK. Trp-56 is lipidated: 3'-geranyl-2',N2-cyclotryptophan; in strain RO-E-2 /NRRL B-23055.

In terms of assembly, interacts directly with the sensor histidine kinase ComP and stimulates its activity. Post-translationally, trp-56 is modified by geranylation, which is essential for activity. Modified by the tryptophan prenyltransferase ComQ before export to the extracellular environment. The type of isoprenyl derivative differs among the different pherotypes and depends on ComX primary sequence.

Its subcellular location is the secreted. Part of a major quorum-sensing system that regulates the development of genetic competence. Acts through the activation of the two-component regulatory system ComP/ComA composed of a sensor histidine kinase, ComP, and a response regulator, ComA. The chain is ComX pheromone from Bacillus spizizenii (Bacillus subtilis subsp. spizizenii).